The sequence spans 283 residues: Putative sugar uptake protein BA_0200/GBAA_0200/BAS0200 (283 aa).

Helical transmembrane passes span 4-21, 26-48, 52-71, 84-106, 110-132, 151-173, 178-195, 208-230, 234-253, and 260-279; these read LLAL…LVSV, GAYS…MYVF, ALTM…WALG, VSTT…GVIA, WTTT…GVVF, LLTL…WYNI, AILP…VLTS, ALSG…RVGV, FPLS…VFLG, and QLIF…VLLG.

Belongs to the GRP transporter (TC 2.A.7.5) family.

The protein localises to the cell membrane. The chain is Putative sugar uptake protein BA_0200/GBAA_0200/BAS0200 from Bacillus anthracis.